The primary structure comprises 195 residues: Pyridoxal 5'-phosphate synthase subunit PdxT (195 aa).

46–48 (GES) contributes to the L-glutamine binding site. The active-site Nucleophile is the Cys78. L-glutamine-binding positions include Arg107 and 136 to 137 (IR). Residues His173 and Glu175 each act as charge relay system in the active site.

Belongs to the glutaminase PdxT/SNO family. In the presence of PdxS, forms a dodecamer of heterodimers. Only shows activity in the heterodimer.

It catalyses the reaction aldehydo-D-ribose 5-phosphate + D-glyceraldehyde 3-phosphate + L-glutamine = pyridoxal 5'-phosphate + L-glutamate + phosphate + 3 H2O + H(+). It carries out the reaction L-glutamine + H2O = L-glutamate + NH4(+). Its pathway is cofactor biosynthesis; pyridoxal 5'-phosphate biosynthesis. Catalyzes the hydrolysis of glutamine to glutamate and ammonia as part of the biosynthesis of pyridoxal 5'-phosphate. The resulting ammonia molecule is channeled to the active site of PdxS. This chain is Pyridoxal 5'-phosphate synthase subunit PdxT, found in Dehalococcoides mccartyi (strain ATCC BAA-2266 / KCTC 15142 / 195) (Dehalococcoides ethenogenes (strain 195)).